The primary structure comprises 153 residues: ORM1-like protein 3 (153 aa).

Topologically, residues 1–21 are cytoplasmic; the sequence is MNVGTAHSEVNPNTRVMNSRG. 2 helical membrane passes run 22 to 42 and 43 to 63; these read IWLS…SIPF and VSVP…MYIF. The Cytoplasmic segment spans residues 64-94; that stretch reads LHTVKGTPFETPDQGKARLLTHWEQMDYGVQ. A helical membrane pass occupies residues 95-117; sequence FTASRKFLTITPIILYFLTSFYT. Residues 118–121 lie on the Extracellular side of the membrane; sequence KYDR. A helical transmembrane segment spans residues 122 to 142; that stretch reads VHFVINTISLLTVLIPKLPQF. Pro-137 carries the hydroxyproline modification. Topologically, residues 143 to 153 are cytoplasmic; that stretch reads HGVRLFGINKY.

It belongs to the ORM family. As to quaternary structure, ceramide-sensitive subunit of the serine palmitoyltransferase (SPT) complex, which is also composed of SPTLC1, SPTLC2/3 and SPTSSA/B. In terms of processing, when hydroxylated at Pro-137, ubiquitinated via 'Lys-48'-linkage, leading to proteasomal degradation. In endothelial cells, ORMDL3 proteasomal degradation is controlled by the sphingosine 1-phosphate receptor signaling pathway.

It localises to the endoplasmic reticulum membrane. Functionally, plays an essential role in the homeostatic regulation of sphingolipid de novo biosynthesis by modulating the activity of the serine palmitoyltransferase (SPT) in response to ceramide levels. When complexed to SPT, the binding of ceramides to its N-terminus stabilizes a conformation that block SPT substrate entry, hence preventing SPT catalytic activity. Through this mechanism, maintains ceramide levels at sufficient concentrations for the production of complex sphingolipids, but which prevents the accumulation of ceramides to levels that trigger apoptosis. The polypeptide is ORM1-like protein 3 (ormdl3) (Danio rerio (Zebrafish)).